Here is a 210-residue protein sequence, read N- to C-terminus: Oxygen-insensitive NADPH nitroreductase (210 aa).

Residue 150-155 participates in NADP(+) binding; that stretch reads GVSLMG.

It belongs to the nitroreductase family.

Functionally, reduction of a variety of nitroaromatic compounds using NADPH as source of reducing equivalents; two electrons are transferred. This chain is Oxygen-insensitive NADPH nitroreductase (rdxA), found in Helicobacter acinonychis (strain Sheeba).